The sequence spans 135 residues: Large ribosomal subunit protein eL32 (135 aa).

It belongs to the eukaryotic ribosomal protein eL32 family.

This chain is Large ribosomal subunit protein eL32, found in Methanococcus maripaludis (strain C6 / ATCC BAA-1332).